The primary structure comprises 219 residues: Cytidylate kinase (219 aa).

Position 21 to 29 (21 to 29 (GPAASGKGT)) interacts with ATP.

Belongs to the cytidylate kinase family. Type 1 subfamily.

The protein resides in the cytoplasm. It catalyses the reaction CMP + ATP = CDP + ADP. The catalysed reaction is dCMP + ATP = dCDP + ADP. This is Cytidylate kinase from Rickettsia typhi (strain ATCC VR-144 / Wilmington).